The chain runs to 923 residues: Neuropilin-1 (923 aa).

The first 21 residues, 1–21, serve as a signal peptide directing secretion; sequence MERGLPLLCATLALALALAGA. Topologically, residues 22–856 are extracellular; it reads FRSDKCGGTI…PGNVLKTLDP (835 aa). 3 cysteine pairs are disulfide-bonded: Cys-27/Cys-54, Cys-82/Cys-104, and Cys-147/Cys-173. 2 consecutive CUB domains span residues 27–141 and 147–265; these read CGGT…YEIF and CSQN…YSVL. N-linked (GlcNAc...) asparagine glycosylation is present at Asn-150. Ca(2+) contacts are provided by Glu-195, Asp-209, and Asp-250. Cys-206 and Cys-228 are oxidised to a cystine. Residues Asn-261, Asn-300, and Asn-522 are each glycosylated (N-linked (GlcNAc...) asparagine). 2 disulfides stabilise this stretch: Cys-275/Cys-424 and Cys-431/Cys-583. 2 F5/8 type C domains span residues 275–424 and 431–583; these read CMEA…VYGC and CSGM…LLGC. A glycan (O-linked (Xyl...) (chondroitin sulfate) serine; alternate) is linked at Ser-612. Ser-612 is a glycosylation site (O-linked (Xyl...) (heparan sulfate) serine; alternate). An MAM domain is found at 645–811; the sequence is TYGFNCEFGW…NHISQEDCAK (167 aa). The interval 820–845 is disordered; that stretch reads TEIKIDETGSTPGYEGEGEGDKNISR. The O-linked (Xyl...) (chondroitin sulfate) serine glycan is linked to Ser-829. Asn-842 is a glycosylation site (N-linked (GlcNAc...) asparagine). A helical transmembrane segment spans residues 857–879; the sequence is ILITIIAMSALGVLLGAVCGVVL. Over 880 to 923 the chain is Cytoplasmic; that stretch reads YCACWHNGMSERNLSALENYNFELVDGVKLKKDKLNPQSNYSEA. Ser-894 bears the Phosphoserine mark.

This sequence belongs to the neuropilin family. As to quaternary structure, homodimer, and heterodimer with NRP2. Binds PLXNB1. Interacts with FER. Interacts with VEGFA. Interacts with ABCB8/MITOSUR in mitochondria. In terms of tissue distribution, nervous system.

It is found in the mitochondrion membrane. It localises to the cell membrane. The protein localises to the cytoplasm. Its function is as follows. Receptor involved in the development of the cardiovascular system, in angiogenesis, in the formation of certain neuronal circuits and in organogenesis outside the nervous system. Mediates the chemorepulsant activity of semaphorins. Recognizes a C-end rule (CendR) motif R/KXXR/K on its ligands which causes cellular internalization and vascular leakage. Binds to semaphorin 3A (SEMA3A), the PLGF-2 isoform of PGF, the VEGF165 isoform of VEGFA and VEGFB. Coexpression with KDR results in increased VEGF165 binding to KDR as well as increased chemotaxis. Regulates VEGF-induced angiogenesis. Binding to VEGFA initiates a signaling pathway needed for motor neuron axon guidance and cell body migration, including for the caudal migration of facial motor neurons from rhombomere 4 to rhombomere 6 during embryonic development. Regulates mitochondrial iron transport via interaction with ABCB8/MITOSUR. In Mus musculus (Mouse), this protein is Neuropilin-1.